We begin with the raw amino-acid sequence, 765 residues long: Probable glycosyltransferase STELLO2 (765 aa).

Over 1-43 (MLVQDRVAPKPPKSRIRELPSRDRFAEPKILDFSSWVSDNVYR) the chain is Cytoplasmic. A helical membrane pass occupies residues 44–64 (IVIIFLFIVTVAAFFFLYNTT). The Lumenal portion of the chain corresponds to 65–765 (DTASLLCFQS…EGDPLLMELV (701 aa)). N-linked (GlcNAc...) asparagine glycans are attached at residues Asn-235 and Asn-723.

The protein belongs to the STELLO family. As to quaternary structure, homo- and heterodimer with STL1. Interacts with CESA1, CESA3, CESA4, CESA6, CESA7 and CESA8, but not with GOT1. As to expression, expressed in cells that are expanding or producing secondary cell walls.

The protein localises to the golgi apparatus membrane. Functionally, probable glycosyltransferase regulating the assembly and trafficking of cellulose synthase complexes. The chain is Probable glycosyltransferase STELLO2 from Arabidopsis thaliana (Mouse-ear cress).